A 277-amino-acid chain; its full sequence is Undecaprenyl-diphosphatase (277 aa).

Helical transmembrane passes span 3 to 23 (YIIE…TEIF), 48 to 68 (LTLF…IYYF), 97 to 117 (ISYA…GLLI), 125 to 145 (LLSI…VFLL), 198 to 218 (SFLC…YDAI), 227 to 247 (IPGF…TIKI), and 257 to 277 (LIWF…LYII).

The protein belongs to the UppP family.

Its subcellular location is the cell membrane. The enzyme catalyses di-trans,octa-cis-undecaprenyl diphosphate + H2O = di-trans,octa-cis-undecaprenyl phosphate + phosphate + H(+). In terms of biological role, catalyzes the dephosphorylation of undecaprenyl diphosphate (UPP). Confers resistance to bacitracin. The polypeptide is Undecaprenyl-diphosphatase (Acholeplasma laidlawii (strain PG-8A)).